A 377-amino-acid chain; its full sequence is Testis-expressed protein 13A (377 aa).

Residues 92–377 form a required for repression of transcription region; sequence WLQDLSSLHK…CGKGIWLQNP (286 aa). Residues 122–156 adopt a coiled-coil conformation; sequence QKEVALQLQMAQAKLEEVQRERDLLRLKILQAELR. Residues 142–165 form an LRR repeat; it reads ERDLLRLKILQAELRALPNAVRPA. Residues 345–369 form a RanBP2-type zinc finger; it reads RPGDWDCPWCKAVNFSRRENCFHCG. Residues Cys-351, Cys-354, Cys-365, and Cys-368 each contribute to the Zn(2+) site.

It belongs to the TEX13 family. In terms of assembly, interacts with CNOT1; the interaction may inhibit CNOT1 binding to mRNA and subsequently CNOT1-mediated mRNA degradation.

In terms of biological role, binds to ssRNA containing the consensus sequence 5'-AGGUAA-3'. Plays a role in transcriptional repression. Required for rapid sperm motility and timely degradation of mRNA via its interaction with CNOT1. The protein is Testis-expressed protein 13A of Mus musculus (Mouse).